The chain runs to 638 residues: Poly(A)-specific ribonuclease PARN (638 aa).

A divalent metal cation-binding residues include Asp-28 and Glu-30. The segment at 143 to 165 (REQYDEKRSQSNGAGALSYTSPN) is disordered. Polar residues predominate over residues 152–165 (QSNGAGALSYTSPN). Phosphoserine is present on residues Ser-163 and Ser-167. In terms of domain architecture, R3H spans 178-245 (KKFIDQVVEK…ERYIVISKVD (68 aa)). Lys-220 carries the post-translational modification N6-acetyllysine. Residues Asp-292 and Asp-382 each coordinate a divalent metal cation. N6-acetyllysine is present on Lys-499. A Phosphoserine modification is found at Ser-530. The residue at position 557 (Ser-557) is a Phosphoserine; by MAPKAPK2. The disordered stretch occupies residues 573–638 (RAEAGLEARA…AKLFEVPDTW (66 aa)). 2 positions are modified to phosphoserine: Ser-583 and Ser-587. Positions 606-615 (KKAKKLKRMK) are enriched in basic residues. Residues Ser-619, Ser-623, and Ser-627 each carry the phosphoserine modification.

The protein belongs to the CAF1 family. As to quaternary structure, homodimer. Found in a mRNA decay complex with RENT1, RENT2 and RENT3B. Interacts with KHSRP. Interacts with CELF1/CUGBP1. Interacts with ZC3HAV1 in an RNA-independent manner. Interacts with DHX36. It depends on Mg(2+) as a cofactor. Phosphorylation by MAPKAPK2, preventing GADD45A mRNA degradation after genotoxic stress.

It is found in the nucleus. The protein localises to the cytoplasm. Its subcellular location is the nucleolus. It catalyses the reaction Exonucleolytic cleavage of poly(A) to 5'-AMP.. In terms of biological role, 3'-exoribonuclease that has a preference for poly(A) tails of mRNAs, thereby efficiently degrading poly(A) tails. Exonucleolytic degradation of the poly(A) tail is often the first step in the decay of eukaryotic mRNAs and is also used to silence certain maternal mRNAs translationally during oocyte maturation and early embryonic development. Involved in nonsense-mediated mRNA decay, a critical process of selective degradation of mRNAs that contain premature stop codons. Also involved in degradation of inherently unstable mRNAs that contain AU-rich elements (AREs) in their 3'-UTR, possibly via its interaction with KHSRP. Probably mediates the removal of poly(A) tails of AREs mRNAs, which constitutes the first step of destabilization. Interacts with both the 3'-end poly(A) tail and the 5'-end cap structure during degradation, the interaction with the cap structure being required for an efficient degradation of poly(A) tails. Also able to recognize poly(A) tails of microRNAs such as MIR21 and H/ACA box snoRNAs (small nucleolar RNAs) leading to microRNAs degradation or snoRNA increased stability. In Bos taurus (Bovine), this protein is Poly(A)-specific ribonuclease PARN (PARN).